Reading from the N-terminus, the 1385-residue chain is Serine-aspartate repeat-containing protein D (1385 aa).

Positions 1–35 are cleaved as a signal peptide; that stretch reads MLNRENKTAITRKGMVSNRLNKFSIRKYTVGTASI. Residues 23 to 34 carry the YSIRK-G/S signaling motif motif; that stretch reads FSIRKYTVGTAS. The segment at 36 to 568 is ligand binding A region; that stretch reads LVGTTLIFGL…NNQSGGAGQE (533 aa). 2 disordered regions span residues 54–162 and 200–224; these read ESTN…DLLE and ETLV…KSTA. 2 stretches are compositionally biased toward polar residues: residues 62–71 and 94–109; these read EATTSASDNQ and EMVS…NGNK. Over residues 130–145 the composition is skewed to basic and acidic residues; that stretch reads KSDEQASPKSTNEDLN. Residues 146–155 show a composition bias toward polar residues; it reads TKQTISNQEG. The segment covering 205-214 has biased composition (low complexity); sequence NNSNSNNENN. CNA-B domains lie at 569 to 680, 681 to 791, 792 to 901, 902 to 1012, and 1013 to 1123; these read VYKI…IYKP, KYNL…YKTP, KYNL…FYKP, TYNL…YKTP, and KYSL…EEET. Disordered stretches follow at residues 856–886, 972–992, and 1077–1361; these read FETP…TGVI, YTPT…GLTT, and FEKP…SNNA. Composition is skewed to polar residues over residues 860-869 and 972-981; these read SGYTPTQVGS and YTPTSVTSGN. Over residues 1081-1090 the composition is skewed to low complexity; the sequence is TGLTQTGTNT. 2 stretches are compositionally biased toward acidic residues: residues 1091 to 1101 and 1118 to 1324; these read TEDDKDADGGE and YYEE…DSDS. An LPXTG sorting signal motif is present at residues 1348–1352; that stretch reads LPETG. At Thr-1351 the chain carries Pentaglycyl murein peptidoglycan amidated threonine. Residues 1352–1385 constitute a propeptide, removed by sortase; that stretch reads GNENSGSNNATLFGGLFAALGSLLLFGRRKKQNK.

Belongs to the serine-aspartate repeat-containing protein (SDr) family. Interacts with host DSG1; this interaction increases S.aureus adherence to keratinocytes.

It is found in the secreted. It localises to the cell wall. Functionally, cell surface-associated calcium-binding protein which plays an important role in adhesion and pathogenesis. Mediates interactions with components of the extracellular matrix such as host DSG1 to promote bacterial adhesion to host cells. Contributes to the resistance to killing by innate immune components such as neutrophils present in blood and thus attenuates bacterial clearance. The chain is Serine-aspartate repeat-containing protein D (sdrD) from Staphylococcus aureus (strain Mu50 / ATCC 700699).